The following is a 208-amino-acid chain: Phosphoheptose isomerase (208 aa).

The region spanning Met-38–Pro-200 is the SIS domain. Residue Asn-53 to Gly-55 participates in substrate binding. The Zn(2+) site is built by His-62 and Glu-66. Substrate contacts are provided by residues Glu-66, Asn-95–Asp-96, Ser-121–Ser-123, Ser-126, and Gln-173. Gln-173 and His-181 together coordinate Zn(2+).

The protein belongs to the SIS family. GmhA subfamily. In terms of assembly, homotetramer. Requires Zn(2+) as cofactor.

It localises to the cytoplasm. It carries out the reaction 2 D-sedoheptulose 7-phosphate = D-glycero-alpha-D-manno-heptose 7-phosphate + D-glycero-beta-D-manno-heptose 7-phosphate. It functions in the pathway carbohydrate biosynthesis; D-glycero-D-manno-heptose 7-phosphate biosynthesis; D-glycero-alpha-D-manno-heptose 7-phosphate and D-glycero-beta-D-manno-heptose 7-phosphate from sedoheptulose 7-phosphate: step 1/1. Catalyzes the isomerization of sedoheptulose 7-phosphate in D-glycero-D-manno-heptose 7-phosphate. This is Phosphoheptose isomerase from Nitratidesulfovibrio vulgaris (strain ATCC 29579 / DSM 644 / CCUG 34227 / NCIMB 8303 / VKM B-1760 / Hildenborough) (Desulfovibrio vulgaris).